A 427-amino-acid chain; its full sequence is Adenylosuccinate synthetase (427 aa).

GTP contacts are provided by residues 12-18 (GDEGKGK) and 40-42 (GHT). D13 (proton acceptor) is an active-site residue. The Mg(2+) site is built by D13 and G40. IMP contacts are provided by residues 13–16 (DEGK), 38–41 (NAGH), T128, R142, Q223, T238, and R302. The active-site Proton donor is the H41. Residue 298–304 (TTTGRPR) participates in substrate binding. GTP is bound by residues R304, 330–332 (LLD), and 412–414 (SVG).

The protein belongs to the adenylosuccinate synthetase family. Homodimer. The cofactor is Mg(2+).

Its subcellular location is the cytoplasm. The enzyme catalyses IMP + L-aspartate + GTP = N(6)-(1,2-dicarboxyethyl)-AMP + GDP + phosphate + 2 H(+). Its pathway is purine metabolism; AMP biosynthesis via de novo pathway; AMP from IMP: step 1/2. In terms of biological role, plays an important role in the de novo pathway of purine nucleotide biosynthesis. Catalyzes the first committed step in the biosynthesis of AMP from IMP. This chain is Adenylosuccinate synthetase, found in Alkaliphilus metalliredigens (strain QYMF).